Consider the following 127-residue polypeptide: Large ribosomal subunit protein bL17 (127 aa).

It belongs to the bacterial ribosomal protein bL17 family. In terms of assembly, part of the 50S ribosomal subunit. Contacts protein L32.

In Actinobacillus pleuropneumoniae serotype 7 (strain AP76), this protein is Large ribosomal subunit protein bL17.